The following is a 283-amino-acid chain: MEMO1 family protein DKAM_1357 (283 aa).

Belongs to the MEMO1 family.

This chain is MEMO1 family protein DKAM_1357, found in Desulfurococcus amylolyticus (strain DSM 18924 / JCM 16383 / VKM B-2413 / 1221n) (Desulfurococcus kamchatkensis).